We begin with the raw amino-acid sequence, 371 residues long: MEVSLNDPASNKTSAKSNSSAFFYFESCQSPSLALLLLLIAYTVVLIMGICGNLSLITIIFKKQREAQNVTNILIANLSLSDILVCVMCIPFTAIYTLMDRWIFGNTMCKLTSYVQSVSISVSIFSLVLIAIERYQLIVNPRGWKPSASHAYWGIMLIWLFSLLLSIPLLLSYHLTDEPFRNLSLPTDLYSHHVVCVEHWPSKTNQLLYSTSLIMLQYFVPLGFMFICYLKIVICLHKRNSKIDRRRENESRLTENKRINTMLISIVVTFAACWLPLNTFNVIFDWYHEVLMSCHHDLVFAICHLVAMVSTCINPLFYGFLNRNFQKDLVVLIHHCLCFALRERYENIAISTLHTDESKGSLRVAHIPAGI.

The Extracellular segment spans residues 1 to 31 (MEVSLNDPASNKTSAKSNSSAFFYFESCQSP). Residues Asn-11 and Asn-18 are each glycosylated (N-linked (GlcNAc...) asparagine). The chain crosses the membrane as a helical span at residues 32 to 52 (SLALLLLLIAYTVVLIMGICG). The Cytoplasmic segment spans residues 53-72 (NLSLITIIFKKQREAQNVTN). A helical transmembrane segment spans residues 73–93 (ILIANLSLSDILVCVMCIPFT). At 94-111 (AIYTLMDRWIFGNTMCKL) the chain is on the extracellular side. Cysteines 109 and 196 form a disulfide. Residues 112-132 (TSYVQSVSISVSIFSLVLIAI) traverse the membrane as a helical segment. Residues 133 to 150 (ERYQLIVNPRGWKPSASH) are Cytoplasmic-facing. The chain crosses the membrane as a helical span at residues 151 to 171 (AYWGIMLIWLFSLLLSIPLLL). Over 172-213 (SYHLTDEPFRNLSLPTDLYSHHVVCVEHWPSKTNQLLYSTSL) the chain is Extracellular. N-linked (GlcNAc...) asparagine glycosylation occurs at Asn-182. The chain crosses the membrane as a helical span at residues 214–234 (IMLQYFVPLGFMFICYLKIVI). Over 235-263 (CLHKRNSKIDRRRENESRLTENKRINTML) the chain is Cytoplasmic. The helical transmembrane segment at 264–284 (ISIVVTFAACWLPLNTFNVIF) threads the bilayer. At 285-297 (DWYHEVLMSCHHD) the chain is on the extracellular side. The chain crosses the membrane as a helical span at residues 298–318 (LVFAICHLVAMVSTCINPLFY). Residues 319 to 371 (GFLNRNFQKDLVVLIHHCLCFALRERYENIAISTLHTDESKGSLRVAHIPAGI) are Cytoplasmic-facing. The S-palmitoyl cysteine moiety is linked to residue Cys-336.

This sequence belongs to the G-protein coupled receptor 1 family. As to expression, expressed in hippocampus, striatum, hypothalamus, cerebellum, small intestine, colon and adrenal gland.

The protein localises to the cell membrane. In terms of biological role, receptor for neuropeptide Y and peptide YY. The activity of this receptor is mediated by G proteins that inhibit adenylate cyclase activity. This Oryctolagus cuniculus (Rabbit) protein is Neuropeptide Y receptor type 6 (NPY6R).